A 175-amino-acid chain; its full sequence is MLPPMALPSVSWMLLSCLMLLSQVQGEEPQRELPSARIRCPKGSKAYGSHCYALFLSPKSWTDADLACQKRPSGNLVSVLSGAEGSFVSSLVKSIGNSYSYVWIGLHDPTQGTEPNGEGWEWSSSDVMNYFAWERNPSTISSPGHCASLSRSTAFLRWKDYNCNVRLPYVCKFTD.

The N-terminal stretch at 1–26 (MLPPMALPSVSWMLLSCLMLLSQVQG) is a signal peptide. A propeptide spanning residues 27–37 (EEPQRELPSAR) is cleaved from the precursor. Disulfide bonds link cysteine 40–cysteine 51, cysteine 68–cysteine 171, and cysteine 146–cysteine 163. The C-type lectin domain maps to 47–172 (YGSHCYALFL…CNVRLPYVCK (126 aa)). Zn(2+)-binding residues include histidine 50 and histidine 107. The segment at 103-118 (WIGLHDPTQGTEPNGE) is sufficient to activate EXTL3. An EPN motif is present at residues 114–116 (EPN). Positions 121 and 145 each coordinate Zn(2+).

Forms a hexameric membrane-permeabilizing oligomeric pore on membrane phospholipids. The hexamer is formed by three dimers related by helical symmetry. Forms filaments, filamentation traps pore complexes and limits damage to host cells. Interacts with EXTL3. In terms of processing, proteolytic processing by trypsin removes an inhibitory N-terminal propeptide and is essential for peptidoglycan binding and antibacterial activity. In terms of tissue distribution, expressed by keratinocytes. Highly expressed in epidermal keratinocytes of psoriasis patients (at protein level). Constitutively expressed in intestine. Low expression is found in healthy pancreas. Overexpressed during the acute phase of pancreatitis and in some patients with chronic pancreatitis.

Its subcellular location is the secreted. Its activity is regulated as follows. Lipopolysaccharide inhibits pore-forming activity, explaining why is bactericidal for Gram-positive but not Gram-negative bacteria. Its function is as follows. Bactericidal C-type lectin which acts exclusively against Gram-positive bacteria and mediates bacterial killing by binding to surface-exposed carbohydrate moieties of peptidoglycan. Binds membrane phospholipids and kills bacteria by forming a hexameric membrane-permeabilizing oligomeric pore. Acts as a hormone in response to different stimuli like anti-inflammatory signals, such as IL17A, or gut microbiome. Secreted by different cell types to activate its receptor EXTL3 and induce cell specific signaling pathways. Induced by IL17A in keratinocytes, regulates keratinocyte proliferation and differentiation after skin injury via activation of EXTL3-PI3K-AKT signaling pathway. In parallel, inhibits skin inflammation through the inhibition of inflammatory cytokines such as IL6 and TNF. In pancreas, is able to permealize beta-cells membrane and stimulate their proliferation. Functionally, has bacteriostatic activity. The protein is Regenerating islet-derived protein 3-alpha of Homo sapiens (Human).